We begin with the raw amino-acid sequence, 1564 residues long: Abnormal spindle-like microcephaly-associated protein homolog (1564 aa).

31 consecutive IQ domains span residues 31–60 (YLWA…MLKS), 220–251 (LKKN…VIIQ), 270–299 (TRSA…SVIK), 293–322 (ILTS…ATIK), 366–395 (MRES…AVIS), 389–420 (QRKA…IIIQ), 439–468 (VKKA…AAVK), 462–491 (QSVA…SIIK), 512–541 (AKAA…AAMK), 535–566 (EHQA…LVIQ), 608–639 (QHTC…LLIQ), 658–687 (TKAA…AAIT), 681–712 (CNTA…IIIQ), 731–762 (LKKT…TFIK), 754–785 (MHRA…IVIQ), 804–835 (ILKA…TLIQ), 827–856 (LRIA…ITRT), 877–908 (LRHS…TLIQ), 900–931 (MHIA…IWIQ), 949–980 (LQNA…AFIQ), 972–1003 (MHRA…VVIQ), 1022–1053 (QRYS…ILIQ), 1045–1076 (MYFS…IFIQ), 1095–1126 (LRKA…VLIQ), 1168–1199 (QWHS…IIIQ), 1304–1333 (HTQA…AATR), 1327–1358 (MHLA…VIIQ), 1377–1406 (VQKS…EKMA), 1452–1483 (QSRA…RIQS), 1474–1503 (QKCA…QKRA), and 1500–1531 (QKRA…VVLQ).

It localises to the cytoplasm. The protein resides in the nucleus. Functionally, probable role in mitotic spindle regulation and coordination of mitotic processes. May have a preferential role in regulating neurogenesis. The polypeptide is Abnormal spindle-like microcephaly-associated protein homolog (ASPM) (Ateles geoffroyi (Black-handed spider monkey)).